The primary structure comprises 359 residues: Pyruvate dehydrogenase E1 component subunit beta, mitochondrial (359 aa).

A mitochondrion-targeting transit peptide spans 1 to 30 (MAVVAVLVRKPLEQVSGLLRRRFHRTAPAA). Y67 carries the phosphotyrosine modification. E89 lines the thiamine diphosphate pocket. K(+) is bound by residues I142, A190, I191, D193, and N195. Position 354 is an N6-acetyllysine (K354).

Heterotetramer of two PDHA1 and two PDHB subunits. The heterotetramer interacts with DLAT, and is part of the multimeric pyruvate dehydrogenase complex that contains multiple copies of pyruvate dehydrogenase (E1), dihydrolipoamide acetyltransferase (DLAT, E2) and lipoamide dehydrogenase (DLD, E3). These subunits are bound to an inner core composed of about 48 DLAT and 12 PDHX molecules. Interacts with DLAT. Thiamine diphosphate serves as cofactor.

The protein resides in the mitochondrion matrix. It catalyses the reaction N(6)-[(R)-lipoyl]-L-lysyl-[protein] + pyruvate + H(+) = N(6)-[(R)-S(8)-acetyldihydrolipoyl]-L-lysyl-[protein] + CO2. Its function is as follows. The pyruvate dehydrogenase complex catalyzes the overall conversion of pyruvate to acetyl-CoA and CO(2), and thereby links the glycolytic pathway to the tricarboxylic cycle. This Bos taurus (Bovine) protein is Pyruvate dehydrogenase E1 component subunit beta, mitochondrial (PDHB).